An 851-amino-acid chain; its full sequence is Molybdenum cofactor sulfurase (851 aa).

Lys249 is modified (N6-(pyridoxal phosphate)lysine). The active site involves Cys413. The MOSC domain maps to 665-844; it reads QYLRKFVMPG…LMVGDIVTPS (180 aa).

Belongs to the class-V pyridoxal-phosphate-dependent aminotransferase family. MOCOS subfamily. Pyridoxal 5'-phosphate serves as cofactor.

The enzyme catalyses Mo-molybdopterin + L-cysteine + AH2 = thio-Mo-molybdopterin + L-alanine + A + H2O. Its pathway is cofactor biosynthesis; molybdopterin biosynthesis. Sulfurates the molybdenum cofactor. Sulfation of molybdenum is essential for xanthine dehydrogenase (XDH) and aldehyde oxidase (ADO) enzymes in which molybdenum cofactor is liganded by 1 oxygen and 1 sulfur atom in active form. This is Molybdenum cofactor sulfurase from Neosartorya fischeri (strain ATCC 1020 / DSM 3700 / CBS 544.65 / FGSC A1164 / JCM 1740 / NRRL 181 / WB 181) (Aspergillus fischerianus).